Reading from the N-terminus, the 273-residue chain is Orotidine 5'-phosphate decarboxylase (273 aa).

The Proton donor role is filled by Lys-97.

The protein belongs to the OMP decarboxylase family. Type 2 subfamily.

It catalyses the reaction orotidine 5'-phosphate + H(+) = UMP + CO2. It functions in the pathway pyrimidine metabolism; UMP biosynthesis via de novo pathway; UMP from orotate: step 2/2. The polypeptide is Orotidine 5'-phosphate decarboxylase (Cellvibrio japonicus (strain Ueda107) (Pseudomonas fluorescens subsp. cellulosa)).